The primary structure comprises 867 residues: DNA endonuclease RBBP8 (867 aa).

The tract at residues 25–48 is essential for binding to the MRN complex and for RPA focus formation on DNA damage; that stretch reads ELWSKLKECHDKELQELLLKINKL. Coiled coils occupy residues 38 to 87 and 120 to 141; these read LQEL…EDRL and ITELMNDKNALQDENKRLSEQL. Disordered regions lie at residues 141–171 and 448–486; these read LHNMQKSRWKSDEENPADTGEGEDGVIPDSP and RYGKRKNAEAEQEESCESSFDKENNIPIKDIGSERHSML. The span at 154–166 shows a compositional bias: acidic residues; the sequence is ENPADTGEGEDGV. Residues 489 to 493 carry the PXDLS motif motif; the sequence is PLDLS. The interval 508 to 531 is damage-recruitment motif; the sequence is SSRGRTKQTFALVPEKPDPKKPLH. Residues Thr817 and Thr829 each carry the phosphothreonine modification. The segment at 843–867 is disordered; it reads SPCQRPRRRQPYNAKFSSKIKEQKT.

It belongs to the COM1/SAE2/CtIP family. In terms of assembly, homotetramer; formed by antiparallel association of helical extensions protruding from the N-termini of two parallel coiled-coil dimers. Interacts with the MRN complex; the interaction links DNA sensing to resection. Interacts with samhd1. In terms of processing, phosphorylation at Thr-817 and Thr-829 promote interaction with nbn and recruitment to double-strand breaks (DSBs).

It is found in the nucleus. It localises to the chromosome. In terms of biological role, endonuclease that cooperates with the MRE11-RAD50-NBN (MRN) complex in DNA-end resection, the first step of double-strand break (DSB) repair through the homologous recombination (HR) pathway. Functions downstream of the MRN complex and ATM, promotes ATR activation and its recruitment to DSBs in the S/G2 phase facilitating the generation of ssDNA. Specifically promotes the endonuclease activity of the MRN complex to clear DNA ends containing protein adducts: recruited to DSBs by nbn following phosphorylation, and promotes the endonuclease of mre11 to clear protein-DNA adducts and generate clean double-strand break ends. The protein is DNA endonuclease RBBP8 (rbbp8) of Xenopus tropicalis (Western clawed frog).